The following is a 758-amino-acid chain: Protein hunchback (758 aa).

Disordered stretches follow at residues 30 to 51 (EPGHHLDGNSVASSPRQSPIPS) and 172 to 214 (EKLQ…EDMK). Residues 39–51 (SVASSPRQSPIPS) show a composition bias toward polar residues. At threonine 178 the chain carries Phosphothreonine. Phosphoserine occurs at positions 188, 207, 209, and 210. The span at 198–214 (EPEKEHDQMSNSSEDMK) shows a compositional bias: basic and acidic residues. C2H2-type zinc fingers lie at residues 240–262 (YKCKTCGVVAITKVDFWAHTRTH), 269–291 (LQCPKCPFVTEFKHHLEYHIRKH), 297–319 (FQCDKCSYTCVNKSMLNSHRKSH), and 325–349 (YRCADCDYATKYCHSFKLHLRKYGH). Disordered regions lie at residues 365-416 (LVID…PVAT) and 513-536 (QLQQQNQQQSDNEEEEQDDEYERK). 2 stretches are compositionally biased toward low complexity: residues 398–415 (VAAVAPQQQQSQPAQPVA) and 513–522 (QLQQQNQQQS). Over residues 523-532 (DNEEEEQDDE) the composition is skewed to acidic residues. Residues serine 537 and serine 540 each carry the phosphoserine modification. A disordered region spans residues 603–695 (MTSPEQLKVP…TTSAVAAPPS (93 aa)). Residues 652-695 (ANTSASSTASSSGNSSNASSNSNGNSSSNSSSNGTTSAVAAPPS) show a composition bias toward low complexity. 2 consecutive C2H2-type zinc fingers follow at residues 705 to 727 (YECKYCDIFFKDAVLYTIHMGYH) and 733 to 757 (FKCNMCGEKCDGPVGLFVHMARNAH).

The protein belongs to the hunchback C2H2-type zinc-finger protein family. In terms of tissue distribution, in embryo, expression of maternal transcript is highest in anterior region. Zygotic transcript is expressed in anterior region until the beginning of gastrulation and in posterior region until early gastrulation. After this, it is expressed in developing nervous system.

Its subcellular location is the nucleus. Functionally, gap class segmentation protein that controls development of head structures. The chain is Protein hunchback from Drosophila melanogaster (Fruit fly).